We begin with the raw amino-acid sequence, 426 residues long: Aspartate aminotransferase, mitochondrial (426 aa).

Residues Met1 to Ala29 constitute a mitochondrion transit peptide. The substrate site is built by Gly60, Trp156, and Asn209. Residue Lys273 is modified to N6-(pyridoxal phosphate)lysine. Arg401 contacts substrate.

Belongs to the class-I pyridoxal-phosphate-dependent aminotransferase family. In terms of assembly, homodimer. The cofactor is pyridoxal 5'-phosphate.

It localises to the mitochondrion matrix. It is found in the cell membrane. The enzyme catalyses L-aspartate + 2-oxoglutarate = oxaloacetate + L-glutamate. It carries out the reaction L-kynurenine + 2-oxoglutarate = kynurenate + L-glutamate + H2O. Functionally, plays a key role in amino acid metabolism. Important for metabolite exchange between mitochondria and cytosol. This Dictyostelium discoideum (Social amoeba) protein is Aspartate aminotransferase, mitochondrial (aatA).